The sequence spans 202 residues: Nascent polypeptide-associated complex subunit alpha (202 aa).

Positions 1–19 are enriched in basic and acidic residues; sequence MADPRVEEIVEEETPKQTV. The tract at residues 1-41 is disordered; it reads MADPRVEEIVEEETPKQTVEDAGSDSESEAGEANIPAGAAV. Positions 45–110 constitute an NAC-A/B domain; sequence SRNEKKARKA…AKIEDLNSQA (66 aa). A compositionally biased stretch (low complexity) spans 117–127; it reads QLAAAEAAAGE. The interval 117 to 165 is disordered; it reads QLAAAEAAAGEHAGHDHEHDLGTKVPEAETKKEEEEDDGEPVDESGLEA. The segment covering 128–149 has biased composition (basic and acidic residues); it reads HAGHDHEHDLGTKVPEAETKKE. Over residues 150–162 the composition is skewed to acidic residues; sequence EEEDDGEPVDESG. The region spanning 163–202 is the UBA domain; it reads LEAKDIELVMAQANVSRKKAVKALRENDNDIVNSIMALSI.

It belongs to the NAC-alpha family. Part of the nascent polypeptide-associated complex (NAC), consisting of egd2 and egd1. NAC associates with ribosomes via egd1.

It is found in the cytoplasm. The protein localises to the nucleus. In terms of biological role, component of the nascent polypeptide-associated complex (NAC), a dynamic component of the ribosomal exit tunnel, protecting the emerging polypeptides from interaction with other cytoplasmic proteins to ensure appropriate nascent protein targeting. The NAC complex also promotes mitochondrial protein import by enhancing productive ribosome interactions with the outer mitochondrial membrane and blocks the inappropriate interaction of ribosomes translating non-secretory nascent polypeptides with translocation sites in the membrane of the endoplasmic reticulum. Egd2 may also be involved in transcription regulation. This chain is Nascent polypeptide-associated complex subunit alpha (egd2), found in Aspergillus oryzae (strain ATCC 42149 / RIB 40) (Yellow koji mold).